The chain runs to 582 residues: V-type ATP synthase alpha chain (582 aa).

Residue 231-238 (GPFGSGKT) participates in ATP binding.

Belongs to the ATPase alpha/beta chains family.

It catalyses the reaction ATP + H2O + 4 H(+)(in) = ADP + phosphate + 5 H(+)(out). Produces ATP from ADP in the presence of a proton gradient across the membrane. The V-type alpha chain is a catalytic subunit. In Deinococcus geothermalis (strain DSM 11300 / CIP 105573 / AG-3a), this protein is V-type ATP synthase alpha chain.